The primary structure comprises 435 residues: tRNA-2-methylthio-N(6)-dimethylallyladenosine synthase (435 aa).

Positions 2-117 constitute an MTTase N-terminal domain; it reads KKASIITYGC…IPQAIEKIEN (116 aa). Residues Cys11, Cys47, Cys80, Cys154, Cys158, and Cys161 each coordinate [4Fe-4S] cluster. A Radical SAM core domain is found at 140–370; it reads FGSDQTASIS…MEVQNKCSFY (231 aa). The region spanning 373–435 is the TRAM domain; sequence SKYKGRIVKV…KTWTLYGEIV (63 aa).

Belongs to the methylthiotransferase family. MiaB subfamily. In terms of assembly, monomer. [4Fe-4S] cluster is required as a cofactor.

It is found in the cytoplasm. It catalyses the reaction N(6)-dimethylallyladenosine(37) in tRNA + (sulfur carrier)-SH + AH2 + 2 S-adenosyl-L-methionine = 2-methylsulfanyl-N(6)-dimethylallyladenosine(37) in tRNA + (sulfur carrier)-H + 5'-deoxyadenosine + L-methionine + A + S-adenosyl-L-homocysteine + 2 H(+). Functionally, catalyzes the methylthiolation of N6-(dimethylallyl)adenosine (i(6)A), leading to the formation of 2-methylthio-N6-(dimethylallyl)adenosine (ms(2)i(6)A) at position 37 in tRNAs that read codons beginning with uridine. The protein is tRNA-2-methylthio-N(6)-dimethylallyladenosine synthase of Fusobacterium nucleatum subsp. nucleatum (strain ATCC 25586 / DSM 15643 / BCRC 10681 / CIP 101130 / JCM 8532 / KCTC 2640 / LMG 13131 / VPI 4355).